A 397-amino-acid polypeptide reads, in one-letter code: Tubby-like protein 8 (397 aa).

Residues 1-16 (MAGSRKVNDLLEENKG) are compositionally biased toward basic and acidic residues. The disordered stretch occupies residues 1 to 46 (MAGSRKVNDLLEENKGNVDTITGSLSTQKGEDKENVSPEKVSTSVE). Residues 17–28 (NVDTITGSLSTQ) are compositionally biased toward polar residues.

The protein belongs to the TUB family. As to expression, mostly expressed in roots, flowers and siliques.

The chain is Tubby-like protein 8 from Arabidopsis thaliana (Mouse-ear cress).